The sequence spans 413 residues: Chemotactic signal transduction system substrate-binding protein BasB (413 aa).

A signal peptide spans 1-31 (MHSTTRREWLGAIGATAATGLAGCAGVGGAG).

It is found in the cell membrane. Its function is as follows. Mediates chemotaxis towards five attractant amino acids (leucine, isoleucine, valine, methionine and cysteine). May function as a receptor that binds the amino acids and transduces a signal to BasT. Has probably no additional role in transport. In Halobacterium salinarum (strain ATCC 29341 / DSM 671 / R1), this protein is Chemotactic signal transduction system substrate-binding protein BasB (basB).